The chain runs to 604 residues: Glutamine--fructose-6-phosphate aminotransferase [isomerizing] (604 aa).

The Nucleophile; for GATase activity role is filled by cysteine 2. One can recognise a Glutamine amidotransferase type-2 domain in the interval 2 to 218 (CGIVGVVGNT…DKELVIVKKD (217 aa)). SIS domains follow at residues 284 to 423 (IIKS…ANGK) and 456 to 594 (VEQL…VDKP). The active-site For Fru-6P isomerization activity is lysine 599.

As to quaternary structure, homodimer.

The protein resides in the cytoplasm. It catalyses the reaction D-fructose 6-phosphate + L-glutamine = D-glucosamine 6-phosphate + L-glutamate. Functionally, catalyzes the first step in hexosamine metabolism, converting fructose-6P into glucosamine-6P using glutamine as a nitrogen source. The sequence is that of Glutamine--fructose-6-phosphate aminotransferase [isomerizing] from Streptococcus agalactiae serotype III (strain NEM316).